We begin with the raw amino-acid sequence, 305 residues long: RxLR effector protein 17 (305 aa).

Residues 1-24 form the signal peptide; that stretch reads MQSILWFALIASVVFLVLVDLASG. The RxLR-dEER motif lies at 45–60; the sequence is RLLRAAHLDRKLSEER. N-linked (GlcNAc...) asparagine glycans are attached at residues Asn207 and Asn227. Residues 247 to 269 form a w motif region; sequence LHLKWAVEAKSPKDVVERILKDL.

This sequence belongs to the RxLR effector family. In terms of assembly, interacts with host A.thaliana At1G14340.

The protein resides in the secreted. Its subcellular location is the host cell membrane. In terms of biological role, secreted effector that confers enhanced plant susceptibility during both compatible and incompatible interactions between the pathogen and its host. Promotes the sexual reproduction of the pathogen in the plant host. This chain is RxLR effector protein 17, found in Hyaloperonospora arabidopsidis (strain Emoy2) (Downy mildew agent).